The primary structure comprises 1637 residues: Kinesin-like protein KIF21B (1637 aa).

The Kinesin motor domain maps to 8-370; it reads CVKVAVRIRP…LKYANRARNI (363 aa). ATP is bound at residue 87–94; sequence GQTGAGKT. 2 coiled-coil regions span residues 376–604 and 631–824; these read VNQD…EEEG and NFQA…ALRR. The tract at residues 400 to 1099 is interaction with TRIM3; sequence MEYKAGKRVI…LQALIYNVQQ (700 aa). The segment covering 509 to 533 has biased composition (low complexity); that stretch reads ASARSPYSLGASPAAPAFGGSPASS. Disordered regions lie at residues 509 to 538 and 552 to 628; these read ASARSPYSLGASPAAPAFGGSPASSMEDAS and KKKE…PEEK. The segment covering 578 to 627 has biased composition (acidic residues); that stretch reads NSEETDENEAEEEEEERDESGCEEEEGREDEDEDSGSEESLVDSDSDPEE. Phosphoserine is present on Ser579. At Thr582 the chain carries Phosphothreonine. 2 disordered regions span residues 830-865 and 880-906; these read SERVAGRAGLKPPMLDSGAEVSASTTSSEAESGARS and FLGDHPAPTVNGTRPARKKFQKKGASQ. Positions 846–865 are enriched in low complexity; it reads SGAEVSASTTSSEAESGARS. Residues 928-1016 adopt a coiled-coil conformation; the sequence is MQRMTIVNLE…EETKEELDST (89 aa). 3 positions are modified to phosphoserine: Ser1149, Ser1167, and Ser1215. The span at 1194–1217 shows a compositional bias: polar residues; the sequence is RTVSLPTRGSTFPRQSRATETSPL. Residues 1194–1251 form a disordered region; the sequence is RTVSLPTRGSTFPRQSRATETSPLTRRKSYDRGQPIRSTDVGFTPPSSPPTRPRNDRN. Thr1237 is modified (phosphothreonine). A Phosphoserine modification is found at Ser1241. WD repeat units lie at residues 1306–1343, 1346–1384, 1410–1448, 1451–1493, 1502–1539, 1543–1582, and 1585–1622; these read GHTKPILCLDATDELLFTGSKDRSCKMWNLVTGQEIAA, GHPNNVVSIKYCSHSGLVFSVSTSYIKVWDIRDSAKCIR, QGEHQINQIALSPSGTMLYAASGNAVRIWELSRFQPVGK, GHIG…TGTI, PHYDGIECLAIQGDILFSGSRDNGIKKWDLDQQELIQQ, AHKDWVCALAFIPGRPMLLSACRAGVIKVWNVDNFTPIGE, and GHDSPINAICTNAKHIFTASSDCRVKLWNYVPGLTPCL.

It belongs to the TRAFAC class myosin-kinesin ATPase superfamily. Kinesin family. In terms of assembly, interacts with TRIM3; the interaction positively affects motility of KIF21B. Interacts with GABARAP and GABA(A) receptor subunits: GABRG2, GABRA1 and GABRA2. May interact with GABA(A) receptor subunits: GABRB2 and GABRB3.

It localises to the cytoplasm. The protein resides in the cytoskeleton. Its subcellular location is the cell projection. It is found in the dendrite. The protein localises to the growth cone. It localises to the axon. The protein resides in the cytoplasmic vesicle. Plus-end directed microtubule-dependent motor protein which displays processive activity. Is involved in regulation of microtubule dynamics, synapse function and neuronal morphology, including dendritic tree branching and spine formation. Plays a role in lerning and memory. Involved in delivery of gamma-aminobutyric acid (GABA(A)) receptor to cell surface. The chain is Kinesin-like protein KIF21B (KIF21B) from Homo sapiens (Human).